Consider the following 49-residue polypeptide: MKKKTSLACSECGSRNYTVNVSGTQKETRLEVKKFCRHCNKHTLHRETK.

It belongs to the bacterial ribosomal protein bL33 family.

This Listeria innocua serovar 6a (strain ATCC BAA-680 / CLIP 11262) protein is Large ribosomal subunit protein bL33B (rpmG2).